The chain runs to 194 residues: uncharacterized protein (194 aa).

Residues 1–24 (MRKFVAFFVIVALAALLAGCGGQG) form the signal peptide.

This is an uncharacterized protein from Archaeoglobus fulgidus (strain ATCC 49558 / DSM 4304 / JCM 9628 / NBRC 100126 / VC-16).